Here is a 287-residue protein sequence, read N- to C-terminus: Elongation factor Ts (287 aa).

The involved in Mg(2+) ion dislocation from EF-Tu stretch occupies residues 80 to 83 (TDFL).

The protein belongs to the EF-Ts family.

The protein resides in the cytoplasm. Its function is as follows. Associates with the EF-Tu.GDP complex and induces the exchange of GDP to GTP. It remains bound to the aminoacyl-tRNA.EF-Tu.GTP complex up to the GTP hydrolysis stage on the ribosome. This Pseudomonas entomophila (strain L48) protein is Elongation factor Ts.